The sequence spans 138 residues: MIIGIGTDIVEIDRINKSIERTPNFINKLFTKKEIEYFISRKMRPEFIAGKFAAKESVAKALGTGFRKFGFRDIEIDKDELGKPLVHLSGGAKETANKFGDYKLHLSISHGRENAIAYAILEVDNNGNCNSSKDEGHR.

2 residues coordinate Mg(2+): Asp-8 and Glu-56.

The protein belongs to the P-Pant transferase superfamily. AcpS family. Mg(2+) is required as a cofactor.

It is found in the cytoplasm. It catalyses the reaction apo-[ACP] + CoA = holo-[ACP] + adenosine 3',5'-bisphosphate + H(+). Transfers the 4'-phosphopantetheine moiety from coenzyme A to a Ser of acyl-carrier-protein. The sequence is that of Holo-[acyl-carrier-protein] synthase from Clostridium novyi (strain NT).